Consider the following 549-residue polypeptide: Probable protein kinase UbiB (549 aa).

One can recognise a Protein kinase domain in the interval 123-501; it reads DFNETPLASA…QQQAHKSNYL (379 aa). ATP is bound by residues 129 to 137 and lysine 152; that span reads LASASISQV. Aspartate 287 serves as the catalytic Proton acceptor. Helical transmembrane passes span 496 to 516 and 520 to 540; these read HKSN…TLLI and ATLW…FVGW.

The protein belongs to the ABC1 family. UbiB subfamily.

It localises to the cell inner membrane. Its pathway is cofactor biosynthesis; ubiquinone biosynthesis [regulation]. In terms of biological role, is probably a protein kinase regulator of UbiI activity which is involved in aerobic coenzyme Q (ubiquinone) biosynthesis. In Shewanella baltica (strain OS185), this protein is Probable protein kinase UbiB.